A 461-amino-acid chain; its full sequence is Asparagine--tRNA ligase (461 aa).

It belongs to the class-II aminoacyl-tRNA synthetase family. In terms of assembly, homodimer.

It localises to the cytoplasm. The enzyme catalyses tRNA(Asn) + L-asparagine + ATP = L-asparaginyl-tRNA(Asn) + AMP + diphosphate + H(+). This is Asparagine--tRNA ligase from Geobacter sulfurreducens (strain ATCC 51573 / DSM 12127 / PCA).